A 268-amino-acid polypeptide reads, in one-letter code: Large ribosomal subunit protein mL46 (268 aa).

Residues 1–25 (MYLKRNIINMQRSFSRQFHISVRNS) constitute a mitochondrion transit peptide.

Belongs to the mitochondrion-specific ribosomal protein mL46 family. Component of the mitochondrial large ribosomal subunit (mt-LSU). Mature yeast 74S mitochondrial ribosomes consist of a small (37S) and a large (54S) subunit. The 37S small subunit contains a 15S ribosomal RNA (15S mt-rRNA) and at least 32 different proteins. The 54S large subunit contains a 21S rRNA (21S mt-rRNA) and at least 45 different proteins.

The protein resides in the mitochondrion. Component of the mitochondrial ribosome (mitoribosome), a dedicated translation machinery responsible for the synthesis of mitochondrial genome-encoded proteins, including at least some of the essential transmembrane subunits of the mitochondrial respiratory chain. The mitoribosomes are attached to the mitochondrial inner membrane and translation products are cotranslationally integrated into the membrane. The chain is Large ribosomal subunit protein mL46 (mrpl17) from Schizosaccharomyces pombe (strain 972 / ATCC 24843) (Fission yeast).